The primary structure comprises 122 residues: Large ribosomal subunit protein uL14 (122 aa).

Belongs to the universal ribosomal protein uL14 family. As to quaternary structure, part of the 50S ribosomal subunit. Forms a cluster with proteins L3 and L19. In the 70S ribosome, L14 and L19 interact and together make contacts with the 16S rRNA in bridges B5 and B8.

Functionally, binds to 23S rRNA. Forms part of two intersubunit bridges in the 70S ribosome. This Chloroflexus aggregans (strain MD-66 / DSM 9485) protein is Large ribosomal subunit protein uL14.